Here is a 302-residue protein sequence, read N- to C-terminus: Nucleotide-binding protein SE_0548 (302 aa).

18 to 25 is a binding site for ATP; the sequence is GMSGAGKS. Residue 69-72 participates in GTP binding; that stretch reads DLRG.

The protein belongs to the RapZ-like family.

Its function is as follows. Displays ATPase and GTPase activities. The sequence is that of Nucleotide-binding protein SE_0548 from Staphylococcus epidermidis (strain ATCC 12228 / FDA PCI 1200).